A 344-amino-acid chain; its full sequence is N-acetyl-gamma-glutamyl-phosphate reductase (344 aa).

Cys149 is an active-site residue.

The protein belongs to the NAGSA dehydrogenase family. Type 1 subfamily.

It localises to the cytoplasm. It catalyses the reaction N-acetyl-L-glutamate 5-semialdehyde + phosphate + NADP(+) = N-acetyl-L-glutamyl 5-phosphate + NADPH + H(+). It functions in the pathway amino-acid biosynthesis; L-arginine biosynthesis; N(2)-acetyl-L-ornithine from L-glutamate: step 3/4. Catalyzes the NADPH-dependent reduction of N-acetyl-5-glutamyl phosphate to yield N-acetyl-L-glutamate 5-semialdehyde. This Acidithiobacillus ferrooxidans (strain ATCC 23270 / DSM 14882 / CIP 104768 / NCIMB 8455) (Ferrobacillus ferrooxidans (strain ATCC 23270)) protein is N-acetyl-gamma-glutamyl-phosphate reductase.